Here is a 135-residue protein sequence, read N- to C-terminus: Interleukin-4 (135 aa).

The N-terminal stretch at 1–24 is a signal peptide; that stretch reads MGLTYQLIPVLVCLLVCTSHFAHG. 3 disulfide bridges follow: cysteine 27/cysteine 135, cysteine 48/cysteine 85, and cysteine 70/cysteine 105. A glycan (N-linked (GlcNAc...) asparagine) is linked at asparagine 62.

This sequence belongs to the IL-4/IL-13 family.

The protein localises to the secreted. Its function is as follows. Participates in at least several B-cell activation processes as well as of other cell types. It is a costimulator of DNA-synthesis. It induces the expression of class II MHC molecules on resting B-cells. It enhances both secretion and cell surface expression of IgE and IgG1. It also regulates the expression of the low affinity Fc receptor for IgE (CD23) on both lymphocytes and monocytes. Positively regulates IL31RA expression in macrophages. Stimulates autophagy in dendritic cells by interfering with mTORC1 signaling and through the induction of RUFY4. This chain is Interleukin-4 (IL4), found in Boselaphus tragocamelus (Nilgai).